A 283-amino-acid chain; its full sequence is Pantothenate synthetase (283 aa).

31-38 is a binding site for ATP; it reads MGALHDGH. Catalysis depends on H38, which acts as the Proton donor. (R)-pantoate is bound at residue Q62. Residue Q62 participates in beta-alanine binding. An ATP-binding site is contributed by 148 to 151; the sequence is GKKD. Residue Q154 coordinates (R)-pantoate. Residues V177 and 185-188 contribute to the ATP site; that span reads KSSR.

It belongs to the pantothenate synthetase family. Homodimer.

It localises to the cytoplasm. It catalyses the reaction (R)-pantoate + beta-alanine + ATP = (R)-pantothenate + AMP + diphosphate + H(+). The protein operates within cofactor biosynthesis; (R)-pantothenate biosynthesis; (R)-pantothenate from (R)-pantoate and beta-alanine: step 1/1. Catalyzes the condensation of pantoate with beta-alanine in an ATP-dependent reaction via a pantoyl-adenylate intermediate. The protein is Pantothenate synthetase of Staphylococcus aureus (strain Mu3 / ATCC 700698).